The following is a 439-amino-acid chain: Sequestosome-1 (439 aa).

A2 is modified (N-acetylalanine). An interaction with LCK region spans residues 2–48 (ASLTVKAYLLGKEEAAREIRRFSFCFSPEPEAEAAAGPGPCERLLSR). The PB1 domain occupies 3–100 (SLTVKAYLLG…DIFRIYIKEK (98 aa)). S24 bears the Phosphoserine mark. The tract at residues 41–105 (PCERLLSRVA…YIKEKKECRR (65 aa)) is interaction with PRKCZ and dimerization. The interval 48 to 78 (RVAVLFPALRPGGFQAHYRDEDGDLVAFSSD) is interaction with PAWR. Positions 119 to 221 (VHPNVICDGC…DGRPCPTAES (103 aa)) are interaction with GABRR3. Residues 120 to 170 (HPNVICDGCNGPVVGTRYKCSVCPDYDLCSVCEGKGLHREHSKLIFPNPFG) form a ZZ-type zinc finger. Zn(2+) is bound by residues C125, C128, C139, and C142. Y145 is modified (phosphotyrosine). Residues C148, C151, H157, and H160 each coordinate Zn(2+). Residues 167–217 (NPFGHLSDSFSHSRWLRKLKHGHFGWPGWEMGPPGNWSPRPPRAGDGRPCP) form an LIM protein-binding region. S173, S175, and S204 each carry phosphoserine. A disordered region spans residues 201-231 (GNWSPRPPRAGDGRPCPTAESASAPSEDPNV). The TRAF6-binding signature appears at 225–230 (PSEDPN). S246 and S263 each carry phosphoserine. The interval 259-389 (GGKRSRLTPT…ALYPHLPPEA (131 aa)) is disordered. The segment covering 265–292 (LTPTSAESSSTGTEDKSGTQPSSCSSEV) has biased composition (polar residues). Residue T266 is modified to Phosphothreonine. The interaction with NTRK1 stretch occupies residues 266-439 (TPTSAESSST…IQYSKHPPPL (174 aa)). Residues S269 and S281 each carry the phosphoserine modification. The S-palmitoyl cysteine moiety is linked to residue C288. S305, S327, and S331 each carry phosphoserine. Residues 320–341 (QPEELMESDNCSGGDDDWTHLS) form an MAP1LC3B-binding region. Positions 335-340 (DDWTHL) match the LIR motif. Positions 336–346 (DWTHLSSKEVD) are enriched in basic and acidic residues. An interaction with KEAP1 region spans residues 346-351 (DPSTGE). Phosphoserine occurs at positions 348, 354, 360, 364, and 365. A compositionally biased stretch (polar residues) spans 350 to 372 (GELQSLQMPESEGPSSLDPSQEG). The region spanning 388-433 (EADPRLIESLSQMLSMGFSDEGGWLTRLLQTKNYDIGAALDTIQYS) is the UBA domain. Residue S402 is modified to Phosphoserine; by ULK1 and TBK1. At S406 the chain carries Phosphoserine. N6-acetyllysine; alternate is present on residues K419 and K434. Residue K419 forms a Glycyl lysine isopeptide (Lys-Gly) (interchain with G-Cter in ubiquitin); alternate linkage. K434 is covalently cross-linked (Glycyl lysine isopeptide (Lys-Gly) (interchain with G-Cter in SUMO2); alternate).

As to quaternary structure, homooligomer or heterooligomer; may form homotypic arrays. Dimerization interferes with ubiquitin binding. Component of a ternary complex with PAWR and PRKCZ. Forms a complex with JUB/Ajuba, PRKCZ and TRAF6. Identified in a complex with TRAF6 and CYLD. Identified in a heterotrimeric complex with ubiquitin and ZFAND5, where ZFAND5 and SQSTM1 both interact with the same ubiquitin molecule. Interacts (via LIR motif) with MAP1LC3A and MAP1LC3B, as well as with other ATG8 family members, including GABARAP, GABARAPL1 and GABARAPL2; these interactions are necessary for the recruitment MAP1 LC3 family members to inclusion bodies containing polyubiquitinated protein aggregates and for their degradation by autophagy. Interacts directly with PRKCI and PRKCZ. Interacts with EBI3, LCK, RASA1, NR2F2, NTRK1, NTRK2, NTRK3, NBR1, MAP2K5 and MAPKAPK5. Upon TNF-alpha stimulation, interacts with RIPK1 probably bridging IKBKB to the TNF-R1 complex composed of TNF-R1/TNFRSF1A, TRADD and RIPK1. Interacts with the proteasome subunits PSMD4 and PSMC2. Interacts with TRAF6. Interacts with 'Lys-63'-linked polyubiquitinated MAPT/TAU. Interacts with FHOD3. Interacts with CYLD. Interacts with SESN1. Interacts with SESN2. Interacts with ULK1. Interacts with UBD. Interacts with WDR81; the interaction is direct and regulates the interaction of SQSTM1 with ubiquitinated proteins. Interacts with WDFY3; this interaction is required to recruit WDFY3 to cytoplasmic bodies and to PML bodies. Interacts with LRRC25. Interacts with STING1; leading to relocalization of STING1 to autophagosomes. Interacts (when phosphorylated at Ser-348) with KEAP1; the interaction is direct and inactivates the BCR(KEAP1) complex by sequestering KEAP1 in inclusion bodies, promoting its degradation. Interacts with MOAP1; promoting dissociation of SQSTM1 inclusion bodies that sequester KEAP1. Interacts with GBP1. Interacts with TAX1BP1. Interacts with (ubiquitinated) PEX5; specifically binds PEX5 ubiquitinated at 'Lys-209' in response to reactive oxygen species (ROS). Interacts (via PB1 domain) with TNS2; the interaction leads to sequestration of TNS2 in cytoplasmic aggregates with SQSTM1 and promotes TNS2 ubiquitination and proteasomal degradation. Interacts with IRS1; the interaction is disrupted by the presence of tensin TNS2. Interacts with TRIM5. Interacts with TRIM11 (when ubiquitinated); promoting AIM2 recruitment to autophagosomes and autophagy-dependent degradation of AIM2. Interacts with TRIM13. Interacts with TRIM16. Interacts with TRIM23. Interacts with TRIM50. Interacts with TRIM55. Interacts with ECSIT; this interaction inhibits TLR4 signaling via functional regulation of the TRAF6-ECSIT complex. Interacts with GABRR1, GABRR2 and GABRR3. Interacts with WDR83. Interacts with GRB2. Interacts with USP12; the interaction is independent of USP12 deubiquitinase activity and may be involved in regulation of autophagic flux. Interacts with ASB6. Post-translationally, phosphorylated. Phosphorylation at Ser-406 by ULK1 destabilizes the UBA dimer interface and increases binding affinity to ubiquitinated proteins. Phosphorylation at Ser-406 also primes for subsequent phosphorylation at Ser-402. Phosphorylation at Ser-402 by CK2 or ULK1 promotes binding to ubiquitinated proteins by increasing the affinity between the UBA domain and polyubiquitin chains. Phosphorylation at Ser-402 by ULK1 is stimulated by SESN2. Phosphorylated at Ser-402 by TBK1, leading to promote relocalization of 'Lys-63'-linked ubiquitinated STING1 to autophagosomes. Phosphorylation at Ser-348 by ULK1 promotes interaction with KEAP1 and inactivation of the BCR(KEAP1) complex, promoting NFE2L2/NRF2 nuclear accumulation and expression of phase II detoxifying enzymes. Phosphorylated in vitro by TTN. Ubiquitinated by UBE2J1 and RNF26 at Lys-434: ubiquitinated SQSTM1 attracts specific vesicle-associated adapters, forming a molecular bridge that restrains cognate vesicles in the perinuclear region and organizes the endosomal pathway for efficient cargo transport. Ubiquitination by UBE2D2 and UBE2D3 increases its ability to bind polyubiquitin chains by destabilizing the UBA dimer interface. Deubiquitination by USP15 releases target vesicles for fast transport into the cell periphery. Ubiquitinated by the BCR(KEAP1) complex at Lys-419, increasing SQSTM1 sequestering activity and promoting its degradation. Ubiquitinated via 'Lys-29' and 'Lys-33'-linked polyubiquitination leading to xenophagic targeting of bacteria and inhibition of their replication. In terms of processing, acetylated at Lys-419 and Lys-434 by KAT5/TIP60, promotes activity by destabilizing the UBA dimer interface and increases binding affinity to ubiquitinated proteins. Deacetylated by HDAC6. Post-translationally, palmitoylation at Cys-288 by ZDHHC19 is required for efficient autophagic degradation of SQSTM1-cargo complexes by promoting affinity for ATG8 proteins and recruitment of p62 bodies to autophagosomes. Dealmitoylated at Cys-288 by LYPLA1. In terms of tissue distribution, ubiquitously expressed. In brain, mainly expressed by neurons, especially pyramidal neurons in the cerebral cortex and hippocampus. Also expressed by Purkinje cells and neurons in the dentate nucleus of the cerebellum and neurons of the basal ganglia (at protein level).

The protein resides in the cytoplasmic vesicle. The protein localises to the autophagosome. It is found in the preautophagosomal structure. It localises to the cytoplasm. Its subcellular location is the cytosol. The protein resides in the nucleus. The protein localises to the PML body. It is found in the late endosome. It localises to the lysosome. Its subcellular location is the endoplasmic reticulum. The protein resides in the myofibril. The protein localises to the sarcomere. Molecular adapter required for selective macroautophagy (aggrephagy) by acting as a bridge between polyubiquitinated proteins and autophagosomes. Promotes the recruitment of ubiquitinated cargo proteins to autophagosomes via multiple domains that bridge proteins and organelles in different steps. SQSTM1 first mediates the assembly and removal of ubiquitinated proteins by undergoing liquid-liquid phase separation upon binding to ubiquitinated proteins via its UBA domain, leading to the formation of insoluble cytoplasmic inclusions, known as p62 bodies. SQSTM1 then interacts with ATG8 family proteins on autophagosomes via its LIR motif, leading to p62 body recruitment to autophagosomes, followed by autophagic clearance of ubiquitinated proteins. SQSTM1 is itself degraded along with its ubiquitinated cargos. Also required to recruit ubiquitinated proteins to PML bodies in the nucleus. Also involved in autophagy of peroxisomes (pexophagy) in response to reactive oxygen species (ROS) by acting as a bridge between ubiquitinated PEX5 receptor and autophagosomes. Acts as an activator of the NFE2L2/NRF2 pathway via interaction with KEAP1: interaction inactivates the BCR(KEAP1) complex by sequestering the complex in inclusion bodies, promoting nuclear accumulation of NFE2L2/NRF2 and subsequent expression of cytoprotective genes. Promotes relocalization of 'Lys-63'-linked ubiquitinated STING1 to autophagosomes. Involved in endosome organization by retaining vesicles in the perinuclear cloud: following ubiquitination by RNF26, attracts specific vesicle-associated adapters, forming a molecular bridge that restrains cognate vesicles in the perinuclear region and organizes the endosomal pathway for efficient cargo transport. Sequesters tensin TNS2 into cytoplasmic puncta, promoting TNS2 ubiquitination and proteasomal degradation. May regulate the activation of NFKB1 by TNF-alpha, nerve growth factor (NGF) and interleukin-1. May play a role in titin/TTN downstream signaling in muscle cells. Adapter that mediates the interaction between TRAF6 and CYLD. Functionally, more potent than isoform 2 to stimulate PRKCZ-dependent phosphorylation of KCNAB2. This chain is Sequestosome-1 (Sqstm1), found in Rattus norvegicus (Rat).